The chain runs to 358 residues: Aromatic amino acid aminotransferase (358 aa).

Position 219 is an N6-(pyridoxal phosphate)lysine (Lys219).

Belongs to the class-II pyridoxal-phosphate-dependent aminotransferase family. As to quaternary structure, homodimer. Requires pyridoxal 5'-phosphate as cofactor.

The enzyme catalyses an aromatic L-alpha-amino acid + 2-oxoglutarate = an aromatic oxo-acid + L-glutamate. Its function is as follows. Aminotransferase that catalyzes the conversion of aromatic amino acids and 2-oxoglutarate into corresponding aromatic oxo acids and L-glutamate. In Nocardia farcinica (strain IFM 10152), this protein is Aromatic amino acid aminotransferase.